A 93-amino-acid polypeptide reads, in one-letter code: Pyrimidine/purine nucleoside phosphorylase (93 aa).

The protein belongs to the nucleoside phosphorylase PpnP family.

It catalyses the reaction a purine D-ribonucleoside + phosphate = a purine nucleobase + alpha-D-ribose 1-phosphate. It carries out the reaction adenosine + phosphate = alpha-D-ribose 1-phosphate + adenine. The enzyme catalyses cytidine + phosphate = cytosine + alpha-D-ribose 1-phosphate. The catalysed reaction is guanosine + phosphate = alpha-D-ribose 1-phosphate + guanine. It catalyses the reaction inosine + phosphate = alpha-D-ribose 1-phosphate + hypoxanthine. It carries out the reaction thymidine + phosphate = 2-deoxy-alpha-D-ribose 1-phosphate + thymine. The enzyme catalyses uridine + phosphate = alpha-D-ribose 1-phosphate + uracil. The catalysed reaction is xanthosine + phosphate = alpha-D-ribose 1-phosphate + xanthine. In terms of biological role, catalyzes the phosphorolysis of diverse nucleosides, yielding D-ribose 1-phosphate and the respective free bases. Can use uridine, adenosine, guanosine, cytidine, thymidine, inosine and xanthosine as substrates. Also catalyzes the reverse reactions. The chain is Pyrimidine/purine nucleoside phosphorylase from Photobacterium profundum (strain SS9).